The sequence spans 132 residues: Small ribosomal subunit protein uS9 (132 aa).

This sequence belongs to the universal ribosomal protein uS9 family.

The polypeptide is Small ribosomal subunit protein uS9 (rps9) (Halobacterium salinarum (strain ATCC 700922 / JCM 11081 / NRC-1) (Halobacterium halobium)).